Here is a 392-residue protein sequence, read N- to C-terminus: Alaserpin (392 aa).

The first 16 residues, 1-16 (MKIIMCIFGLAALAMA), serve as a signal peptide directing secretion. Residue Asn-85 is glycosylated (N-linked (GlcNAc...) asparagine).

Belongs to the serpin family. In terms of tissue distribution, hemolymph.

It localises to the secreted. It is found in the extracellular space. Inhibits elastase. This Manduca sexta (Tobacco hawkmoth) protein is Alaserpin.